The sequence spans 529 residues: MAPARTMARARLAPAGIPAVALWLLCTLGLQGTQAGPPPAPPGLPAGADCLNSFTAGVPGFVLDTNASVSNGATFLESPTVRRGWDCVRACCTTQNCNLALVELQPDRGEDAIAACFLINCLYEQNFVCKFAPREGFINYLTREVYRSYRQLRTQGFGGSGIPKAWAGIDLKVQPQEPLVLKDVENTDWRLLRGDTDVRVERKDPNQVELWGLKEGTYLFQLTVTSSDHPEDTANVTVTVLSTKQTEDYCLASNKVGRCRGSFPRWYYDPTEQICKSFVYGGCLGNKNNYLREEECILACRGVQGGPLRGSSGAQATFPQGPSMERRHPVCSGTCQPTQFRCSNGCCIDSFLECDDTPNCPDASDEAACEKYTSGFDELQRIHFPSDKGHCVDLPDTGLCKESIPRWYYNPFSEHCARFTYGGCYGNKNNFEEEQQCLESCRGISKKDVFGLRREIPIPSTGSVEMAVAVFLVICIVVVVAILGYCFFKNQRKDFHGHHHHPPPTPASSTVSTTEDTEHLVYNHTTRPL.

Positions 1–35 (MAPARTMARARLAPAGIPAVALWLLCTLGLQGTQA) are cleaved as a signal peptide. Residues 57-140 (GVPGFVLDTN…FAPREGFINY (84 aa)) form the MANSC domain. 2 N-linked (GlcNAc...) asparagine glycosylation sites follow: Asn66 and Asn235. Residues 250-300 (CLASNKVGRCRGSFPRWYYDPTEQICKSFVYGGCLGNKNNYLREEECILAC) form the BPTI/Kunitz inhibitor 1 domain. Intrachain disulfides connect Cys250-Cys300, Cys259-Cys283, Cys275-Cys296, Cys335-Cys347, Cys342-Cys360, Cys354-Cys369, Cys391-Cys441, Cys400-Cys424, and Cys416-Cys437. The LDL-receptor class A domain occupies 334–370 (TCQPTQFRCSNGCCIDSFLECDDTPNCPDASDEAACE). Residues 391 to 441 (CVDLPDTGLCKESIPRWYYNPFSEHCARFTYGGCYGNKNNFEEEQQCLESC) enclose the BPTI/Kunitz inhibitor 2 domain. Asn523 carries N-linked (GlcNAc...) asparagine glycosylation.

In terms of assembly, interacts with HGFAC. Interacts with TMPRSS13; the interaction promotes the phosphorylation and cell membrane localization of TMPRSS13.

The protein localises to the secreted. It is found in the cytoplasm. It localises to the cell membrane. Functionally, inhibitor of HGFAC. Inhibits serine protease activity of ST14/matriptase in vitro. Inhibits serine protease activity of TMPRSS13, via the BPTI/Kunitz inhibitor 1 domain. The polypeptide is Kunitz-type protease inhibitor 1 (SPINT1) (Homo sapiens (Human)).